The primary structure comprises 150 residues: MKVSRHTKILEIINLKDIETQEELAEELRRSGMEVTQATVSRDIKELKLIKVLSSKGRYKYATISPTESFLSNKLVTIFAQTVLNVDRVNNMVVVKTISGSANAAAEAIDSLNLDGIAGSIAGDNTIFILSRSEETAFNIVQKLKKMINE.

This sequence belongs to the ArgR family.

The protein localises to the cytoplasm. Its pathway is amino-acid biosynthesis; L-arginine biosynthesis [regulation]. Its function is as follows. Regulates arginine biosynthesis genes. In Clostridium acetobutylicum (strain ATCC 824 / DSM 792 / JCM 1419 / IAM 19013 / LMG 5710 / NBRC 13948 / NRRL B-527 / VKM B-1787 / 2291 / W), this protein is Arginine repressor.